The chain runs to 125 residues: uncharacterized protein (125 aa).

The region spanning 19 to 73 (IYSLRLAKGLSRQQLAEVIDVTHQQLQKYEKAINRISVGRLVLIAEALDRNIDYF) is the HTH cro/C1-type domain. Residues 30–49 (RQQLAEVIDVTHQQLQKYEK) constitute a DNA-binding region (H-T-H motif).

This is an uncharacterized protein from Rickettsia conorii (strain ATCC VR-613 / Malish 7).